A 325-amino-acid polypeptide reads, in one-letter code: Large ribosomal subunit protein uL18 (325 aa).

The interval 247 to 300 is disordered; sequence IRIPPSRRNPRRRSPRSGGRWPSCRSPPARRRSRSTRPTSWPRSRPTSKPKRPR. Composition is skewed to low complexity over residues 262–273 and 282–291; these read RSGGRWPSCRSP and TRPTSWPRSR.

Belongs to the universal ribosomal protein uL18 family. In terms of assembly, component of the large ribosomal subunit (LSU).

The protein localises to the cytoplasm. Its subcellular location is the nucleus. Its function is as follows. Component of the ribosome, a large ribonucleoprotein complex responsible for the synthesis of proteins in the cell. The small ribosomal subunit (SSU) binds messenger RNAs (mRNAs) and translates the encoded message by selecting cognate aminoacyl-transfer RNA (tRNA) molecules. The large subunit (LSU) contains the ribosomal catalytic site termed the peptidyl transferase center (PTC), which catalyzes the formation of peptide bonds, thereby polymerizing the amino acids delivered by tRNAs into a polypeptide chain. The nascent polypeptides leave the ribosome through a tunnel in the LSU and interact with protein factors that function in enzymatic processing, targeting, and the membrane insertion of nascent chains at the exit of the ribosomal tunnel. The sequence is that of Large ribosomal subunit protein uL18 (RpL5) from Anopheles gambiae (African malaria mosquito).